Here is a 343-residue protein sequence, read N- to C-terminus: Cytoplasmic tRNA 2-thiolation protein 1 (343 aa).

Belongs to the TtcA family. CTU1/NCS6/ATPBD3 subfamily.

Its subcellular location is the cytoplasm. The protein operates within tRNA modification; 5-methoxycarbonylmethyl-2-thiouridine-tRNA biosynthesis. Its function is as follows. Plays a central role in 2-thiolation of mcm(5)S(2)U at tRNA wobble positions of tRNA(Lys), tRNA(Glu) and tRNA(Gln). Directly binds tRNAs and probably acts by catalyzing adenylation of tRNAs, an intermediate required for 2-thiolation. It is unclear whether it acts as a sulfurtransferase that transfers sulfur from thiocarboxylated URM1 onto the uridine of tRNAs at wobble position. This chain is Cytoplasmic tRNA 2-thiolation protein 1, found in Drosophila sechellia (Fruit fly).